Reading from the N-terminus, the 227-residue chain is GRF-interacting factor 1 (227 aa).

The span at 124-139 (ALSPLQQQQQQQAAAA) shows a compositional bias: low complexity. Disordered stretches follow at residues 124–160 (ALSP…LHGE) and 188–227 (GGGG…EEGS). Residues 217 to 227 (EYLKGTEEEGS) are compositionally biased toward basic and acidic residues.

The protein belongs to the SS18 family. As to quaternary structure, interacts with GRF4. In terms of tissue distribution, highly expressed in internodes, nodes, developing spikelets and developing anthers. Expressed at low levels in roots and mature glumes.

The protein localises to the nucleus. It is found in the cytoplasm. Functionally, transcription coactivator that plays a role in the regulation of meristematic function in leaves, stems and inflorescences. May regulate leaf size, length of stem internodes, and seed size by promoting cell expansion. Transcription coactivator that plays a role in the regulation of grain size. Component of a network formed by the microRNA396 (miRNA396), the GRFs and their interacting factors (GIFs) acting in the regulation of meristem function, at least partially through the control of cell proliferation. Component of the miRNA396c-GRF4-GIF1 regulatory module that plays an important role in grain size determination. The protein is GRF-interacting factor 1 of Oryza sativa subsp. japonica (Rice).